Reading from the N-terminus, the 40-residue chain is Photosystem II reaction center protein J (40 aa).

The chain crosses the membrane as a helical span at residues 8 to 28; the sequence is IPLWLVALVAGTGVLVVVGLF.

Belongs to the PsbJ family. PSII is composed of 1 copy each of membrane proteins PsbA, PsbB, PsbC, PsbD, PsbE, PsbF, PsbH, PsbI, PsbJ, PsbK, PsbL, PsbM, PsbT, PsbX, PsbY, PsbZ, Psb30/Ycf12, peripheral proteins PsbO, CyanoQ (PsbQ), PsbU, PsbV and a large number of cofactors. It forms dimeric complexes.

It localises to the cellular thylakoid membrane. One of the components of the core complex of photosystem II (PSII). PSII is a light-driven water:plastoquinone oxidoreductase that uses light energy to abstract electrons from H(2)O, generating O(2) and a proton gradient subsequently used for ATP formation. It consists of a core antenna complex that captures photons, and an electron transfer chain that converts photonic excitation into a charge separation. The sequence is that of Photosystem II reaction center protein J from Trichodesmium erythraeum (strain IMS101).